The following is an 811-amino-acid chain: MERGKMAEAESLETAAEHERILREIESTDTACIGPTLRSVYDGEEHGRFMEKLETRIRNHDREIEKMCNFHYQGFVDSITELLKVRGEAQKLKNQVTDTNRKLQHEGKELVIAMEELKQCRLQQRNISATVDKLMLCLPVLEMYSKLRDQMKTKRHYPALKTLEHLEHTYLPQVSHYRFCKVMVDNIPKLREEIKDVSMSDLKDFLESIRKHSDKIGETAMKQAQQQRNLDNIVLQQPRIGSKRKSKKDAYIIFDTEIESTSPKSEQDSGILDVEDEEDDEEVPGAQDLVDFSPVYRCLHIYSVLGARETFENYYRKQRRKQARLVLQPPSNMHETLDGYRKYFNQIVGFFVVEDHILHTTQGLVNRAYIDELWEMALSKTIAALRTHSSYCSDPNLVLDLKNLIVLFADTLQVYGFPVNQLFDMLLEIRDQYSETLLKKWAGIFRNILDSDNYSPIPVTSEEMYKKVVGQFPFQDIELEKQPFPKKFPFSEFVPKVYNQIKEFIYACLKFSEDLHLSSTEVDDMIRKSTNLLLTRTLSNSLQNVIKRKNIGLTELVQIIINTTHLEKSCKYLEEFITNITNVLPETVHTTKLYGTTTFKDARHAAEEEIYTNLNQKIDQFLQLADYDWMTGDLGNKASDYLVDLIAFLRSTFAVFTHLPGKVAQTACMSACKHLATSLMQLLLEAEVRQLTLGALQQFNLDVRECEQFARSGPVPGFQEDTLQLAFIDLRQLLDLFIQWDWSTYLADYGQPNCKYLRVNPVTALTLLEKMKDTSRKNNMFAQFRKNERDKQKLIDTVAKQLRGLISSHHS.

The stretch at 50–119 (MEKLETRIRN…LVIAMEELKQ (70 aa)) forms a coiled coil. The interval 260 to 280 (STSPKSEQDSGILDVEDEEDD) is disordered.

The protein belongs to the SEC15 family. In terms of assembly, the exocyst complex is composed of SEC3, SEC5, SEC6, SEC8, SEC10, SEC15, EXO70 and EXO84.

In terms of biological role, component of the exocyst complex involved in the docking of exocytic vesicles with fusion sites on the plasma membrane. This Homo sapiens (Human) protein is Exocyst complex component 6B (EXOC6B).